Here is a 314-residue protein sequence, read N- to C-terminus: 4-hydroxy-3-methylbut-2-enyl diphosphate reductase (314 aa).

Position 12 (cysteine 12) interacts with [4Fe-4S] cluster. (2E)-4-hydroxy-3-methylbut-2-enyl diphosphate-binding residues include histidine 43 and histidine 81. Dimethylallyl diphosphate is bound by residues histidine 43 and histidine 81. Isopentenyl diphosphate is bound by residues histidine 43 and histidine 81. Cysteine 103 is a [4Fe-4S] cluster binding site. Histidine 131 is a (2E)-4-hydroxy-3-methylbut-2-enyl diphosphate binding site. Histidine 131 contacts dimethylallyl diphosphate. Histidine 131 serves as a coordination point for isopentenyl diphosphate. The active-site Proton donor is the glutamate 133. Residue threonine 170 coordinates (2E)-4-hydroxy-3-methylbut-2-enyl diphosphate. Cysteine 198 is a [4Fe-4S] cluster binding site. (2E)-4-hydroxy-3-methylbut-2-enyl diphosphate-binding residues include serine 226, asparagine 228, and serine 271. Positions 226, 228, and 271 each coordinate dimethylallyl diphosphate. Isopentenyl diphosphate is bound by residues serine 226, asparagine 228, and serine 271.

This sequence belongs to the IspH family. Requires [4Fe-4S] cluster as cofactor.

The catalysed reaction is isopentenyl diphosphate + 2 oxidized [2Fe-2S]-[ferredoxin] + H2O = (2E)-4-hydroxy-3-methylbut-2-enyl diphosphate + 2 reduced [2Fe-2S]-[ferredoxin] + 2 H(+). It catalyses the reaction dimethylallyl diphosphate + 2 oxidized [2Fe-2S]-[ferredoxin] + H2O = (2E)-4-hydroxy-3-methylbut-2-enyl diphosphate + 2 reduced [2Fe-2S]-[ferredoxin] + 2 H(+). The protein operates within isoprenoid biosynthesis; dimethylallyl diphosphate biosynthesis; dimethylallyl diphosphate from (2E)-4-hydroxy-3-methylbutenyl diphosphate: step 1/1. It functions in the pathway isoprenoid biosynthesis; isopentenyl diphosphate biosynthesis via DXP pathway; isopentenyl diphosphate from 1-deoxy-D-xylulose 5-phosphate: step 6/6. In terms of biological role, catalyzes the conversion of 1-hydroxy-2-methyl-2-(E)-butenyl 4-diphosphate (HMBPP) into a mixture of isopentenyl diphosphate (IPP) and dimethylallyl diphosphate (DMAPP). Acts in the terminal step of the DOXP/MEP pathway for isoprenoid precursor biosynthesis. This Bacillus licheniformis (strain ATCC 14580 / DSM 13 / JCM 2505 / CCUG 7422 / NBRC 12200 / NCIMB 9375 / NCTC 10341 / NRRL NRS-1264 / Gibson 46) protein is 4-hydroxy-3-methylbut-2-enyl diphosphate reductase.